The chain runs to 478 residues: Endoplasmic reticulum oxidoreductin-1 (478 aa).

An N-terminal signal peptide occupies residues Met1–Thr20. Disulfide bonds link Cys28–Cys41, Cys30–Cys39, Cys79–Cys384, Cys88–Cys93, Cys209–Cys230, and Cys387–Cys390. Positions Ala117–Thr143 are disordered. FAD-binding residues include Arg188, Thr190, and Trp201. FAD contacts are provided by Ser241, His244, Arg283, and Arg295. The N-linked (GlcNAc...) asparagine glycan is linked to Asn377. Residues Glu459–Leu478 form a disordered region.

Belongs to the EROs family. In terms of assembly, may function both as a monomer and a homodimer. The cofactor is FAD.

It is found in the endoplasmic reticulum membrane. In terms of biological role, oxidoreductase involved in disulfide bond formation in the endoplasmic reticulum. Efficiently reoxidizes pdi-1, the enzyme catalyzing protein disulfide formation, in order to allow pdi-1 to sustain additional rounds of disulfide formation. Following pdi reoxidation, passes its electrons to molecular oxygen via FAD, leading to the production of reactive oxygen species (ROS) in the cell. In Caenorhabditis elegans, this protein is Endoplasmic reticulum oxidoreductin-1 (ero-1).